A 548-amino-acid polypeptide reads, in one-letter code: CBS domain-containing protein CBSCBSPB4 (548 aa).

Polar residues predominate over residues 1 to 18; the sequence is MANQGGPSRKSLSFSGHS. Residues 1–58 form a disordered region; the sequence is MANQGGPSRKSLSFSGHSFQGRKKASENEGGGGGGSDLLPRRSLTSSRSSISLSGERS. Phosphoserine is present on serine 18. Residues 37 to 56 show a composition bias toward low complexity; that stretch reads DLLPRRSLTSSRSSISLSGE. CBS domains follow at residues 63-126, 133-190, 233-293, and 301-358; these read VKRL…NLEE, MTKN…ERSV, IIPE…LPQE, and MTPN…AGST. Residues 411–498 enclose the PB1 domain; that stretch reads PNTFAFKLQD…KGLKLHLDYT (88 aa). Residues 521–543 form a helical membrane-spanning segment; sequence AAAYKTVAAGAALAAGLGVLVYL.

Its subcellular location is the membrane. The protein is CBS domain-containing protein CBSCBSPB4 (CBSCBSPB4) of Arabidopsis thaliana (Mouse-ear cress).